A 296-amino-acid chain; its full sequence is 33 kDa chaperonin (296 aa).

Cystine bridges form between C233–C235 and C267–C270.

This sequence belongs to the HSP33 family. Post-translationally, under oxidizing conditions two disulfide bonds are formed involving the reactive cysteines. Under reducing conditions zinc is bound to the reactive cysteines and the protein is inactive.

The protein resides in the cytoplasm. In terms of biological role, redox regulated molecular chaperone. Protects both thermally unfolding and oxidatively damaged proteins from irreversible aggregation. Plays an important role in the bacterial defense system toward oxidative stress. The chain is 33 kDa chaperonin from Actinobacillus pleuropneumoniae serotype 5b (strain L20).